The following is a 625-amino-acid chain: MPNSILFLLLSFLYLTNCVAQSPSQTCPLDFSHVLTIPWNTTDCQKSDKSADSKNSCCQSLLTLIGIPLAHRLKQTSNFRLPNLATSISCLNNLQTKLSSLSLSSNLTSLCFDPNQFVINNETCAGIQTTQDWVSRLGPSTALDSACSSGLTDLTRCDACVAAGFRVQKQLITLDGNSSHGVYCYHFVVTYAAGIVNKKGPESDDALSCLFSLSLRSPLNSKKKRHTVALALGITGAIFGALVIAGLICLYFRFGKAVKGGEVGWEDQGSRPKWRPNTGSIWFKIEELEKATNNFSQKNFIGRGGFGFVYKGVLPDGSVIAVKKVIESEFQGDAEFRNEVEIISNLKHRNLVPLRGCSMVDDDSESQRYLVYDYMSNGNLDDHLFPRGETTKMPLSWPQRKSIILDVAKGLAYLHYGVKPAIYHRDIKGTNILLDVDMRARVADFGLAKQSREGESHLTTRVAGTHGYLAPEYALYGQLTEKSDVYSFGVVILEIMCGRKALDLSTSGSPNTFLITDWAWSLVKAGKTEEALEQSLLREEGSGLSNPKGIMERFLQVGILCAHVLVALRPTILDALKMLEGDIEVPPIPDRPVPLAHPSYRMDGNGFTISPALSGLQIHSGDMLR.

A signal peptide spans 1–20 (MPNSILFLLLSFLYLTNCVA). Topologically, residues 21 to 227 (QSPSQTCPLD…PLNSKKKRHT (207 aa)) are extracellular. N-linked (GlcNAc...) asparagine glycosylation is found at asparagine 40, asparagine 106, asparagine 121, and asparagine 177. A helical membrane pass occupies residues 228–248 (VALALGITGAIFGALVIAGLI). Over 249-625 (CLYFRFGKAV…LQIHSGDMLR (377 aa)) the chain is Cytoplasmic. One can recognise a Protein kinase domain in the interval 295–555 (FSQKNFIGRG…NPKGIMERFL (261 aa)). ATP contacts are provided by residues 301 to 309 (IGRGGFGFV) and lysine 323. The active-site Proton acceptor is aspartate 426.

This sequence belongs to the protein kinase superfamily. Ser/Thr protein kinase family.

The protein resides in the membrane. It catalyses the reaction L-seryl-[protein] + ATP = O-phospho-L-seryl-[protein] + ADP + H(+). The catalysed reaction is L-threonyl-[protein] + ATP = O-phospho-L-threonyl-[protein] + ADP + H(+). This Arabidopsis thaliana (Mouse-ear cress) protein is Probable receptor-like protein kinase At1g11050.